A 273-amino-acid chain; its full sequence is 1,4-dihydroxy-2-naphthoyl-CoA synthase (273 aa).

Substrate contacts are provided by residues R34, 73-77 (SGGDQ), Y85, 117-121 (YAVGG), T143, S149, Y246, and K261. Hydrogencarbonate is bound at residue 142-144 (QTG). The span at 254 to 265 (GRDAFKEKRDPD) shows a compositional bias: basic and acidic residues. The interval 254–273 (GRDAFKEKRDPDFDQFPKFP) is disordered.

It belongs to the enoyl-CoA hydratase/isomerase family. MenB subfamily. Requires hydrogencarbonate as cofactor.

It carries out the reaction 2-succinylbenzoyl-CoA + H(+) = 1,4-dihydroxy-2-naphthoyl-CoA + H2O. The protein operates within quinol/quinone metabolism; 1,4-dihydroxy-2-naphthoate biosynthesis; 1,4-dihydroxy-2-naphthoate from chorismate: step 6/7. It functions in the pathway quinol/quinone metabolism; menaquinone biosynthesis. Converts o-succinylbenzoyl-CoA (OSB-CoA) to 1,4-dihydroxy-2-naphthoyl-CoA (DHNA-CoA). This is 1,4-dihydroxy-2-naphthoyl-CoA synthase from Staphylococcus aureus (strain MRSA252).